The primary structure comprises 303 residues: D-alanine--D-alanine ligase (303 aa).

The region spanning 100-295 is the ATP-grasp domain; sequence KQLLRRHGIL…FPALIARLIE (196 aa). 127 to 180 is an ATP binding site; sequence GLGYPLFVKPNTGGSSLCLSRVTQPEGLAPALEAVFAHCGEAIVEPAIPGVEVT. Mg(2+)-binding residues include Asp-249, Glu-262, and Asn-264.

It belongs to the D-alanine--D-alanine ligase family. Mg(2+) is required as a cofactor. Mn(2+) serves as cofactor.

Its subcellular location is the cytoplasm. The enzyme catalyses 2 D-alanine + ATP = D-alanyl-D-alanine + ADP + phosphate + H(+). The protein operates within cell wall biogenesis; peptidoglycan biosynthesis. Functionally, cell wall formation. In Nitratidesulfovibrio vulgaris (strain ATCC 29579 / DSM 644 / CCUG 34227 / NCIMB 8303 / VKM B-1760 / Hildenborough) (Desulfovibrio vulgaris), this protein is D-alanine--D-alanine ligase.